Consider the following 145-residue polypeptide: MIALIQRVSSASVTVEGNIIGEIDKGLLILLGVEQGDDEQKATRLCERVLGYRIFADDDGKMNLNVRQAGGNVLVVSQFTLVADTQRGMRPGFSRGADPSEADRLYQYFVEQCREQGVHTETGQFAADMKVALVNDGPVTFWLQT.

The Gly-cisPro motif, important for rejection of L-amino acids motif lies at 137-138; the sequence is GP.

This sequence belongs to the DTD family. In terms of assembly, homodimer.

It is found in the cytoplasm. It carries out the reaction glycyl-tRNA(Ala) + H2O = tRNA(Ala) + glycine + H(+). It catalyses the reaction a D-aminoacyl-tRNA + H2O = a tRNA + a D-alpha-amino acid + H(+). Its function is as follows. An aminoacyl-tRNA editing enzyme that deacylates mischarged D-aminoacyl-tRNAs. Also deacylates mischarged glycyl-tRNA(Ala), protecting cells against glycine mischarging by AlaRS. Acts via tRNA-based rather than protein-based catalysis; rejects L-amino acids rather than detecting D-amino acids in the active site. By recycling D-aminoacyl-tRNA to D-amino acids and free tRNA molecules, this enzyme counteracts the toxicity associated with the formation of D-aminoacyl-tRNA entities in vivo and helps enforce protein L-homochirality. This chain is D-aminoacyl-tRNA deacylase, found in Pectobacterium atrosepticum (strain SCRI 1043 / ATCC BAA-672) (Erwinia carotovora subsp. atroseptica).